A 147-amino-acid polypeptide reads, in one-letter code: Large ribosomal subunit protein bL9 (147 aa).

This sequence belongs to the bacterial ribosomal protein bL9 family.

Its function is as follows. Binds to the 23S rRNA. In Thermodesulfovibrio yellowstonii (strain ATCC 51303 / DSM 11347 / YP87), this protein is Large ribosomal subunit protein bL9.